The primary structure comprises 510 residues: Putative serine protease K12H4.7 (510 aa).

The N-terminal stretch at Met1–Ser19 is a signal peptide. Ser187 acts as the Charge relay system in catalysis. An N-linked (GlcNAc...) asparagine glycan is attached at Asn234. The Charge relay system role is filled by Asp452. Asn473 carries an N-linked (GlcNAc...) asparagine glycan. Catalysis depends on His477, which acts as the Charge relay system.

The protein belongs to the peptidase S28 family.

The sequence is that of Putative serine protease K12H4.7 from Caenorhabditis elegans.